Consider the following 95-residue polypeptide: uncharacterized protein (95 aa).

K21 is a binding site for phosphate. D44 contacts Mg(2+). A phosphate-binding site is contributed by N47.

This sequence belongs to the HAD-like hydrolase superfamily. Cof family. Requires Mg(2+) as cofactor.

This is an uncharacterized protein from Geobacillus stearothermophilus (Bacillus stearothermophilus).